Reading from the N-terminus, the 4834-residue chain is E3 ubiquitin-protein ligase HERC2 (4834 aa).

The interval threonine 50–proline 88 is disordered. Residues proline 59–glutamate 84 show a composition bias toward basic and acidic residues. Threonine 272 carries the post-translational modification Phosphothreonine. The stretch at proline 415–lysine 461 is one RCC1 1-1 repeat. Residues arginine 462–alanine 512 form an RCC1 1-2 repeat. Residues threonine 513–alanine 568 form an RCC1 1-3 repeat. Residues glutamate 569–valine 620 form an RCC1 1-4 repeat. The RCC1 1-5 repeat unit spans residues asparagine 623–lysine 674. At threonine 647 the chain carries Phosphothreonine. The RCC1 1-6 repeat unit spans residues aspartate 675–glutamate 726. An RCC1 1-7 repeat occupies serine 728–serine 778. The stretch at leucine 948 to threonine 980 forms a coiled coil. The region spanning valine 1207 to leucine 1283 is the Cytochrome b5 heme-binding domain. Positions arginine 1555–glutamate 1575 are disordered. Residues threonine 1566–glutamate 1575 show a composition bias toward acidic residues. The residue at position 1577 (serine 1577) is a Phosphoserine. The region spanning serine 1859–proline 1932 is the MIB/HERC2 domain. The interval alanine 1933 to histidine 1958 is disordered. Residues glutamate 1940–glutamate 1951 show a composition bias toward acidic residues. Serine 1942 carries the phosphoserine modification. Threonine 1944 bears the Phosphothreonine mark. At serine 2454 the chain carries Phosphoserine. Residues arginine 2554 to tyrosine 2630 enclose the CPH domain. Residues histidine 2703 to glutamine 2755 form a ZZ-type zinc finger. Positions 2708, 2711, 2723, 2726, 2732, 2735, 2741, and 2745 each coordinate Zn(2+). One can recognise a DOC domain in the interval phenylalanine 2759 to glutamate 2936. Residue serine 2928 is modified to Phosphoserine. An RCC1 2-1 repeat occupies arginine 2958–valine 3009. Residues glutamate 3010–valine 3064 form an RCC1 2-2 repeat. One copy of the RCC1 2-3 repeat lies at aspartate 3065–serine 3116. The RCC1 2-4 repeat unit spans residues glycine 3118–leucine 3168. One copy of the RCC1 2-5 repeat lies at glutamate 3171 to lysine 3222. The stretch at glycine 3224–aspartate 3274 is one RCC1 2-6 repeat. The stretch at serine 3275–threonine 3326 is one RCC1 2-7 repeat. Polar residues-rich tracts occupy residues serine 3602–proline 3611 and histidine 3618–threonine 3629. Positions serine 3602 to threonine 3629 are disordered. The stretch at serine 3951–alanine 4002 is one RCC1 3-1 repeat. The RCC1 3-2 repeat unit spans residues glycine 4004–serine 4056. Residues glycine 4058–alanine 4108 form an RCC1 3-3 repeat. An RCC1 3-4 repeat occupies glycine 4110–aspartate 4162. One copy of the RCC1 3-5 repeat lies at aspartate 4164–lysine 4214. The stretch at glycine 4216–glutamate 4266 is one RCC1 3-6 repeat. The RCC1 3-7 repeat unit spans residues glycine 4268–threonine 4318. The HECT domain maps to aspartate 4457–aspartate 4794. Residue cysteine 4762 is the Glycyl thioester intermediate of the active site. The tract at residues glutamate 4804 to histidine 4834 is disordered. The span at alanine 4806 to aspartate 4820 shows a compositional bias: acidic residues. Serine 4810, serine 4811, and serine 4814 each carry phosphoserine. The segment covering alanine 4823–histidine 4834 has biased composition (polar residues). Threonine 4827 is modified (phosphothreonine).

Interacts (when phosphorylated at Thr-4827 and sumoylated) with RNF8 (via FHA domain); this interaction increases after ionizing radiation (IR) treatment. Interacts with XPA. Interacts with NEURL4. Via its interaction with NEURL4, may indirectly interact with CCP110 and CEP97. Phosphorylation at Thr-4827 is required for interaction with RNF8. Post-translationally, sumoylated with SUMO1 by PIAS4 in response to double-strand breaks (DSBs), promoting the interaction with RNF8.

Its subcellular location is the cytoplasm. The protein resides in the cytoskeleton. The protein localises to the microtubule organizing center. It is found in the centrosome. It localises to the centriole. Its subcellular location is the nucleus. The enzyme catalyses S-ubiquitinyl-[E2 ubiquitin-conjugating enzyme]-L-cysteine + [acceptor protein]-L-lysine = [E2 ubiquitin-conjugating enzyme]-L-cysteine + N(6)-ubiquitinyl-[acceptor protein]-L-lysine.. It functions in the pathway protein modification; protein ubiquitination. In terms of biological role, E3 ubiquitin-protein ligase that regulates ubiquitin-dependent retention of repair proteins on damaged chromosomes. Recruited to sites of DNA damage in response to ionizing radiation (IR) and facilitates the assembly of UBE2N and RNF8 promoting DNA damage-induced formation of 'Lys-63'-linked ubiquitin chains. Acts as a mediator of binding specificity between UBE2N and RNF8. Involved in the maintenance of RNF168 levels. E3 ubiquitin-protein ligase that promotes the ubiquitination and proteasomal degradation of XPA which influences the circadian oscillation of DNA excision repair activity. By controlling the steady-state expression of the IGF1R receptor, indirectly regulates the insulin-like growth factor receptor signaling pathway. Also modulates iron metabolism by regulating the basal turnover of FBXL5. The chain is E3 ubiquitin-protein ligase HERC2 from Homo sapiens (Human).